We begin with the raw amino-acid sequence, 159 residues long: E3 ubiquitin ligase complex SCF subunit sconC (159 aa).

The interval 101 to 159 (ILAANYLDIKALLDVGCKTVANMIKGKSPEEIRKTFNIQNDFTPEEEDQIRRENEWAEE) is interaction with the F-box domain of F-box proteins.

It belongs to the SKP1 family. As to quaternary structure, component of the SCF (SKP1-CUL1-F-box protein) E3 ubiquitin ligase complexes.

The protein operates within protein modification; protein ubiquitination. Its function is as follows. Essential component of the SCF (SKP1-CUL1-F-box protein) E3 ubiquitin ligase complexes, which mediate the ubiquitination and subsequent proteasomal degradation of target proteins. Controls sulfur metabolite repression, probably by mediating the inactivation or degradation of the metR transcription factor. This is E3 ubiquitin ligase complex SCF subunit sconC (sconC) from Aspergillus clavatus (strain ATCC 1007 / CBS 513.65 / DSM 816 / NCTC 3887 / NRRL 1 / QM 1276 / 107).